Reading from the N-terminus, the 110-residue chain is Nucleoid-associated protein KPN78578_04440 (110 aa).

It belongs to the YbaB/EbfC family. In terms of assembly, homodimer.

It is found in the cytoplasm. The protein localises to the nucleoid. Binds to DNA and alters its conformation. May be involved in regulation of gene expression, nucleoid organization and DNA protection. This is Nucleoid-associated protein KPN78578_04440 from Klebsiella pneumoniae subsp. pneumoniae (strain ATCC 700721 / MGH 78578).